The sequence spans 305 residues: Outer membrane protein assembly factor BamD (305 aa).

The first 24 residues, 1–24 (MLRIFQGRPAVTIAAVLVAASVAG), serve as a signal peptide directing secretion. C25 carries N-palmitoyl cysteine lipidation. C25 carries S-diacylglycerol cysteine lipidation. TPR repeat units lie at residues 41–74 (VELL…HPYS), 78–111 (RRSI…YPGN), 113–136 (SAQY…NRDQ), and 174–207 (AGKE…HQTT).

This sequence belongs to the BamD family. Part of the Bam complex.

Its subcellular location is the cell outer membrane. Its function is as follows. Part of the outer membrane protein assembly complex, which is involved in assembly and insertion of beta-barrel proteins into the outer membrane. The protein is Outer membrane protein assembly factor BamD of Caulobacter vibrioides (strain ATCC 19089 / CIP 103742 / CB 15) (Caulobacter crescentus).